Here is a 616-residue protein sequence, read N- to C-terminus: Chaperone protein HscA (616 aa).

Belongs to the heat shock protein 70 family.

Chaperone involved in the maturation of iron-sulfur cluster-containing proteins. Has a low intrinsic ATPase activity which is markedly stimulated by HscB. Involved in the maturation of IscU. The chain is Chaperone protein HscA from Shigella boydii serotype 18 (strain CDC 3083-94 / BS512).